The chain runs to 212 residues: Glycerol-3-phosphate acyltransferase (212 aa).

5 helical membrane passes run 10–30 (FAALLIVLAYLIGCVPFAVVV), 90–110 (GYGLVLIAVFLGHLYPVSLGF), 124–144 (FAVSPWLALATVATWLLVAVV), 150–170 (LAALVAAFLAPVYYFFGGGTI), and 171–191 (WPLNAPTAAALVGVSALLFYR).

This sequence belongs to the PlsY family. In terms of assembly, probably interacts with PlsX.

It localises to the cell inner membrane. The enzyme catalyses an acyl phosphate + sn-glycerol 3-phosphate = a 1-acyl-sn-glycero-3-phosphate + phosphate. It functions in the pathway lipid metabolism; phospholipid metabolism. Functionally, catalyzes the transfer of an acyl group from acyl-phosphate (acyl-PO(4)) to glycerol-3-phosphate (G3P) to form lysophosphatidic acid (LPA). This enzyme utilizes acyl-phosphate as fatty acyl donor, but not acyl-CoA or acyl-ACP. The polypeptide is Glycerol-3-phosphate acyltransferase (Bordetella avium (strain 197N)).